The primary structure comprises 212 residues: Pyridoxine/pyridoxamine 5'-phosphate oxidase (212 aa).

Residues 7-10 (RREY) and K65 each bind substrate. FMN-binding positions include 60–65 (RIVLLK), 75–76 (FT), R81, K82, and Q104. Positions 122, 126, and 130 each coordinate substrate. Residues 139–140 (QS) and W184 contribute to the FMN site. 190-192 (RLH) contributes to the substrate binding site. R194 contributes to the FMN binding site.

This sequence belongs to the pyridoxamine 5'-phosphate oxidase family. In terms of assembly, homodimer. It depends on FMN as a cofactor.

It catalyses the reaction pyridoxamine 5'-phosphate + O2 + H2O = pyridoxal 5'-phosphate + H2O2 + NH4(+). It carries out the reaction pyridoxine 5'-phosphate + O2 = pyridoxal 5'-phosphate + H2O2. It functions in the pathway cofactor metabolism; pyridoxal 5'-phosphate salvage; pyridoxal 5'-phosphate from pyridoxamine 5'-phosphate: step 1/1. The protein operates within cofactor metabolism; pyridoxal 5'-phosphate salvage; pyridoxal 5'-phosphate from pyridoxine 5'-phosphate: step 1/1. Its function is as follows. Catalyzes the oxidation of either pyridoxine 5'-phosphate (PNP) or pyridoxamine 5'-phosphate (PMP) into pyridoxal 5'-phosphate (PLP). This is Pyridoxine/pyridoxamine 5'-phosphate oxidase from Pseudoalteromonas translucida (strain TAC 125).